The primary structure comprises 487 residues: UDP-glycosyltransferase 85A7 (487 aa).

UDP-alpha-D-glucose is bound by residues 364 to 366, 381 to 389, and 403 to 406; these read CPQ, HCGWNSTLE, and FSEQ.

Belongs to the UDP-glycosyltransferase family. In terms of tissue distribution, expressed in roots, shoots, leaves and flowers.

This Arabidopsis thaliana (Mouse-ear cress) protein is UDP-glycosyltransferase 85A7 (UGT85A7).